A 320-amino-acid polypeptide reads, in one-letter code: Heterogeneous nuclear ribonucleoprotein A1 (320 aa).

Residue Met1 is modified to N-acetylmethionine. Ser2 bears the N-acetylserine; in Heterogeneous nuclear ribonucleoprotein A1, N-terminally processed mark. Residue Ser2 is modified to Phosphoserine. Lys3 carries the post-translational modification N6-acetyllysine; alternate. Lys3 is covalently cross-linked (Glycyl lysine isopeptide (Lys-Gly) (interchain with G-Cter in SUMO2); alternate). Ser4 and Ser6 each carry phosphoserine. Residues 4–94 (SESPKEPEQL…EPKRAVSRED (91 aa)) are globular A domain. Lys8 is covalently cross-linked (Glycyl lysine isopeptide (Lys-Gly) (interchain with G-Cter in SUMO2)). 2 consecutive RRM domains span residues 14–97 (RKLF…DSQR) and 105–184 (KKIF…LCKQ). Ser22 carries the post-translational modification Phosphoserine. Lys78 is covalently cross-linked (Glycyl lysine isopeptide (Lys-Gly) (interchain with G-Cter in SUMO2)). The tract at residues 95–185 (SQRPGAHLTV…EVRKALCKQE (91 aa)) is globular B domain. Lys113 participates in a covalent cross-link: Glycyl lysine isopeptide (Lys-Gly) (interchain with G-Cter in SUMO). Residues Lys179 and Lys183 each participate in a glycyl lysine isopeptide (Lys-Gly) (interchain with G-Cter in SUMO2) cross-link. A disordered region spans residues 188–216 (SASSSQRGRSGSGNFGGGRGGGFGGNDNF). Position 192 is a phosphoserine; by MKNK2 (Ser192). Arg194 bears the Asymmetric dimethylarginine; alternate mark. The residue at position 194 (Arg194) is a Dimethylated arginine; alternate. Arg194 is modified (omega-N-methylarginine; alternate). The segment covering 197–216 (SGSGNFGGGRGGGFGGNDNF) has biased composition (gly residues). Phosphoserine is present on Ser199. Residues Arg206, Arg218, Arg225, and Arg232 each carry the asymmetric dimethylarginine; alternate modification. Arg206 is subject to Dimethylated arginine; alternate. Residues Arg206, Arg218, Arg225, and Arg232 each carry the omega-N-methylarginine; alternate modification. Positions 218 to 240 (RGGNFSGRGGFGGSRGGGGYGGS) are RNA-binding RGG-box. The residue at position 225 (Arg225) is a Dimethylated arginine; alternate. The nuclear targeting sequence stretch occupies residues 268–305 (NQSSNFGPMKGGNFGGRSSGPYGGGGQYFAKPRNQGGY). A disordered region spans residues 271–320 (SNFGPMKGGNFGGRSSGPYGGGGQYFAKPRNQGGYGGSSSSSSYGSGRRF). Positions 276-294 (MKGGNFGGRSSGPYGGGGQ) are enriched in gly residues. Arg284 is modified (omega-N-methylarginine). Ser285 is subject to Phosphoserine. The residue at position 298 (Lys298) is an N6-acetyllysine; alternate. Lys298 participates in a covalent cross-link: Glycyl lysine isopeptide (Lys-Gly) (interchain with G-Cter in SUMO2); alternate. Omega-N-methylarginine is present on Arg300. Over residues 308–320 (SSSSSSYGSGRRF) the composition is skewed to low complexity. Ser309 is modified (phosphoserine). Phosphoserine; by MKNK2 occurs at positions 310, 311, and 312. 2 positions are modified to phosphoserine: Ser313 and Ser316. Arg318 is subject to Omega-N-methylarginine.

In terms of assembly, identified in the spliceosome C complex. Identified in a IGF2BP1-dependent mRNP granule complex containing untranslated mRNAs. Interacts with SEPT6. Interacts with C9orf72. Interacts with KHDRBS1. Interacts with UBQLN2. Interacts with PPIA/CYPA. Sumoylated.

The protein localises to the nucleus. The protein resides in the cytoplasm. Functionally, involved in the packaging of pre-mRNA into hnRNP particles, transport of poly(A) mRNA from the nucleus to the cytoplasm and modulation of splice site selection. Plays a role in the splicing of pyruvate kinase PKM by binding repressively to sequences flanking PKM exon 9, inhibiting exon 9 inclusion and resulting in exon 10 inclusion and production of the PKM M2 isoform. Binds to the IRES and thereby inhibits the translation of the apoptosis protease activating factor APAF1. May bind to specific miRNA hairpins. This Rattus norvegicus (Rat) protein is Heterogeneous nuclear ribonucleoprotein A1 (Hnrnpa1).